Reading from the N-terminus, the 395-residue chain is Nicotinamide/nicotinic acid mononucleotide adenylyltransferase 2 (395 aa).

Disordered regions lie at residues 1–34 (MDPTKAPDFKPPQPNEELQPPPDPTHTIPKSGPI) and 62–102 (KKNA…NGID). Over residues 9-24 (FKPPQPNEELQPPPDP) the composition is skewed to pro residues. Ser85, Ser89, and Ser90 each carry phosphoserine. Positions 167 and 168 each coordinate NAD(+). ATP-binding residues include His175 and Arg209. 6 residues coordinate NAD(+): Thr247, Gly282, Asp284, Trp295, Arg314, and Asn345. 350–353 (TKVR) is a binding site for ATP.

This sequence belongs to the eukaryotic NMN adenylyltransferase family. The cofactor is Co(2+).

The protein resides in the nucleus. The catalysed reaction is beta-nicotinamide D-ribonucleotide + ATP + H(+) = diphosphate + NAD(+). It carries out the reaction nicotinate beta-D-ribonucleotide + ATP + H(+) = deamido-NAD(+) + diphosphate. It functions in the pathway cofactor biosynthesis; NAD(+) biosynthesis; deamido-NAD(+) from nicotinate D-ribonucleotide: step 1/1. The protein operates within cofactor biosynthesis; NAD(+) biosynthesis; NAD(+) from nicotinamide D-ribonucleotide: step 1/1. Its function is as follows. Catalyzes the formation of NAD(+) from nicotinamide mononucleotide (NMN) and ATP. Can also use the deamidated form; nicotinic acid mononucleotide (NaMN) as substrate to form deamido-NAD(+) (NaAD). Key enzyme in both de novo and salvage pathways for NAD(+) biosynthesis. Predominantly acts in the salvage pathways via NMN. This is Nicotinamide/nicotinic acid mononucleotide adenylyltransferase 2 from Saccharomyces cerevisiae (strain ATCC 204508 / S288c) (Baker's yeast).